We begin with the raw amino-acid sequence, 137 residues long: MKPGEIIVKKTEIEINKGTDDSETVITVKNIGDRPIQVGSHYHFFEANTGLKFDREKAYGKHLDIPAGAAVRFEPGDEKKVQLVEYNGRRRIYGFRGLVDGAIDEERVFRVENGHPNAGVKNDEGKQNANKESGDNR.

A disordered region spans residues 113–137; the sequence is NGHPNAGVKNDEGKQNANKESGDNR.

This sequence belongs to the urease beta subunit family. In terms of assembly, heterotrimer of UreA (gamma), UreB (beta) and UreC (alpha) subunits. Three heterotrimers associate to form the active enzyme.

Its subcellular location is the cytoplasm. The enzyme catalyses urea + 2 H2O + H(+) = hydrogencarbonate + 2 NH4(+). The protein operates within nitrogen metabolism; urea degradation; CO(2) and NH(3) from urea (urease route): step 1/1. This chain is Urease subunit beta, found in Staphylococcus carnosus (strain TM300).